The primary structure comprises 356 residues: Golgi-resident adenosine 3',5'-bisphosphate 3'-phosphatase (356 aa).

An N-acetylmethionine modification is found at Met1. The Cytoplasmic portion of the chain corresponds to 1–12 (MAPMGIRLSPLG). A helical transmembrane segment spans residues 13–33 (VAVFFLLGLGVLYHLYSGFLA). At 34–356 (GRFSLFGLGS…KLPDLEKSGH (323 aa)) the chain is on the lumenal side. The segment at 84–104 (ESNVLHEKSKGKTREGADDKM) is disordered. Residue Asp108 is the Proton acceptor of the active site. Residues Glu131, Asp172, Leu174, and Asp175 each coordinate Mg(2+). Thr177 (proton acceptor) is an active-site residue. The AMP site is built by Ser240 and His243. Asn257 carries N-linked (GlcNAc...) asparagine glycosylation. 2 residues coordinate AMP: Gly266 and Lys270. Residue Asp298 coordinates Mg(2+).

Belongs to the inositol monophosphatase superfamily. It depends on Mg(2+) as a cofactor. Post-translationally, N-glycosylated. Contains N-linked glycan resistant to endoglycosydase H.

The protein resides in the golgi apparatus. Its subcellular location is the trans-Golgi network membrane. It catalyses the reaction adenosine 3',5'-bisphosphate + H2O = AMP + phosphate. Its pathway is sulfur metabolism. Its activity is regulated as follows. Strongly inhibited by lithium. Its function is as follows. Exhibits 3'-nucleotidase activity toward adenosine 3',5'-bisphosphate (PAP), namely hydrolyzes adenosine 3',5'-bisphosphate into adenosine 5'-monophosphate (AMP) and a phosphate. May play a role in the formation of skeletal elements derived through endochondral ossification, possibly by clearing adenosine 3',5'-bisphosphate produced by Golgi sulfotransferases during glycosaminoglycan sulfation. Has no activity toward 3'-phosphoadenosine 5'-phosphosulfate (PAPS) or inositol phosphate (IP) substrates including I(1)P, I(1,4)P2, I(1,3,4)P3, I(1,4,5)P3 and I(1,3,4,5)P4. This is Golgi-resident adenosine 3',5'-bisphosphate 3'-phosphatase from Mus musculus (Mouse).